The following is a 269-amino-acid chain: Formamidopyrimidine-DNA glycosylase (269 aa).

Proline 2 acts as the Schiff-base intermediate with DNA in catalysis. Glutamate 3 serves as the catalytic Proton donor. The Proton donor; for beta-elimination activity role is filled by lysine 57. DNA contacts are provided by histidine 90, arginine 109, and lysine 150. An FPG-type zinc finger spans residues 235-269 (FVYGRAGEPCRICGEQIESIKLGQRSTFFCRHCQY). Residue arginine 259 is the Proton donor; for delta-elimination activity of the active site.

This sequence belongs to the FPG family. Monomer. The cofactor is Zn(2+).

The enzyme catalyses Hydrolysis of DNA containing ring-opened 7-methylguanine residues, releasing 2,6-diamino-4-hydroxy-5-(N-methyl)formamidopyrimidine.. The catalysed reaction is 2'-deoxyribonucleotide-(2'-deoxyribose 5'-phosphate)-2'-deoxyribonucleotide-DNA = a 3'-end 2'-deoxyribonucleotide-(2,3-dehydro-2,3-deoxyribose 5'-phosphate)-DNA + a 5'-end 5'-phospho-2'-deoxyribonucleoside-DNA + H(+). In terms of biological role, involved in base excision repair of DNA damaged by oxidation or by mutagenic agents. Acts as a DNA glycosylase that recognizes and removes damaged bases. Has a preference for oxidized purines, such as 7,8-dihydro-8-oxoguanine (8-oxoG). Has AP (apurinic/apyrimidinic) lyase activity and introduces nicks in the DNA strand. Cleaves the DNA backbone by beta-delta elimination to generate a single-strand break at the site of the removed base with both 3'- and 5'-phosphates. The sequence is that of Formamidopyrimidine-DNA glycosylase from Photorhabdus laumondii subsp. laumondii (strain DSM 15139 / CIP 105565 / TT01) (Photorhabdus luminescens subsp. laumondii).